A 366-amino-acid polypeptide reads, in one-letter code: Chorismate synthase (366 aa).

Residue Arg-48 coordinates NADP(+). Residues 125–127, Gly-285, 300–304, and Arg-327 each bind FMN; these read RSS and KPTPS.

The protein belongs to the chorismate synthase family. FMNH2 serves as cofactor.

It carries out the reaction 5-O-(1-carboxyvinyl)-3-phosphoshikimate = chorismate + phosphate. It participates in metabolic intermediate biosynthesis; chorismate biosynthesis; chorismate from D-erythrose 4-phosphate and phosphoenolpyruvate: step 7/7. Catalyzes the anti-1,4-elimination of the C-3 phosphate and the C-6 proR hydrogen from 5-enolpyruvylshikimate-3-phosphate (EPSP) to yield chorismate, which is the branch point compound that serves as the starting substrate for the three terminal pathways of aromatic amino acid biosynthesis. This reaction introduces a second double bond into the aromatic ring system. The protein is Chorismate synthase of Methanococcoides burtonii (strain DSM 6242 / NBRC 107633 / OCM 468 / ACE-M).